A 180-amino-acid chain; its full sequence is uncharacterized protein (180 aa).

This is an uncharacterized protein from Magallana gigas (Pacific oyster).